We begin with the raw amino-acid sequence, 311 residues long: Glycine--tRNA ligase alpha subunit (311 aa).

Belongs to the class-II aminoacyl-tRNA synthetase family. In terms of assembly, tetramer of two alpha and two beta subunits.

It localises to the cytoplasm. It carries out the reaction tRNA(Gly) + glycine + ATP = glycyl-tRNA(Gly) + AMP + diphosphate. This Bradyrhizobium diazoefficiens (strain JCM 10833 / BCRC 13528 / IAM 13628 / NBRC 14792 / USDA 110) protein is Glycine--tRNA ligase alpha subunit.